The chain runs to 103 residues: UPF0473 protein LCA_0390 (103 aa).

This sequence belongs to the UPF0473 family.

In Latilactobacillus sakei subsp. sakei (strain 23K) (Lactobacillus sakei subsp. sakei), this protein is UPF0473 protein LCA_0390.